A 479-amino-acid chain; its full sequence is MGQLLPKYNILTEDQVQKIHENTMKILEEIGIEFEYEPALEVFRREGQKVEGKRVYLTREFVESKLKSAPAEFTLHARNPENNVVIGGDNIVFMPGYGAPFIYELDGSRRKTTLQDYENFAKLAGASKNMHLSGGTMAEPQDIPDGVRHLQMLYSSIKNSDKCFMGSAEGKERAEDSVEIAAILFGGKDVIKEKPVLVSLINSLTPLKYDERMLGALMAYAEAGQAVIIASLVMAGSTGPASLAGTLSLQNAEVLAGISLAQSINPGTPVIYGSTSALSDMRSGSLSIGSPECALFISASAQLARFYGVPSRSGGGLNDSKTVDAQAGYESMMTLMAANLTGVNFVLHTAGILQYFMAMSYEKFIMDDEIAGMLLHYMKGYTFDEDGMAFDVIEKVGPGGHFLTQKHTRKNHKREFYTPTLSDRSAYDTWAKEKLETKQRAHARWQQILANYVPPALDPEIDAKLQAFIAQRGKEVGEE.

The protein belongs to the trimethylamine methyltransferase family.

It catalyses the reaction Co(I)-[glycine betaine-specific corrinoid protein] + glycine betaine + H(+) = methyl-Co(III)-[glycine betaine-specific corrinoid protein] + N,N-dimethylglycine. Methyltransferase able to methylate free cob(I)alamin in vitro, using glycine betaine as the methyl donor, yealding methylcobalamin (methylCbl) and dimethylglycine. In vivo, probably carries out the methylation of a corrinoid protein, likely the adjacently encoded DSY3155, with glycine betaine, to then supply methyl groups to tetrahydrofolate (THF) for ultimate conversion to carbon dioxide; oxidation of the methyl group would also provide reducing equivalents for anaerobic respiration. Thus, may function in the pathway that allows anaerobic methylotrophic growth of D.hafniense using glycine betaine. Cannot use quaternary amines such as carnitine and choline as substrates, nor tertiary amines such as dimethylglycine or trimethylamine. This is Glycine betaine methyltransferase from Desulfitobacterium hafniense (strain Y51).